The sequence spans 247 residues: Protein IRON-RELATED TRANSCRIPTION FACTOR 2 (247 aa).

The short motif at 68–75 (HRKLSHNA) is the Nuclear localization signal element. The basic motif stretch occupies residues 68-81 (HRKLSHNAYERDRR). The bHLH domain maps to 68–119 (HRKLSHNAYERDRRKQLNELYSSLRALLPDADHTKLSIPTTVSRVLKYIPEL). The interval 82–119 (KQLNELYSSLRALLPDADHTKLSIPTTVSRVLKYIPEL) is helix-loop-helix motif.

Belongs to the bHLH protein family. In terms of assembly, forms homodimers. Interacts with BHLH156 in the nucleus. In terms of tissue distribution, expressed constitutively at low levels in the roots. Also observed in flowers, developing seeds, embryos and vascular bundles.

The protein resides in the nucleus. It localises to the cytoplasm. Functionally, transcription activator that binds to the DNA motif 5'-CACGTGG-3' in the promoter of iron (Fe) deficiency-inducible genes as well as of genes involved in iron homeostasis, thus contributing to basal tolerance to iron deficiency, iron uptake from soil and iron transport, particularly during seed maturation and germination. Promotes the accumulation of mugineic acid family phytosiderophores (MAs). Required for ethylene-mediated signaling during iron deficiency responses. Improves growth and yield, especially in calcareous soil with low iron availability. Promotes iron concentration in shoots and grain. In Oryza sativa subsp. japonica (Rice), this protein is Protein IRON-RELATED TRANSCRIPTION FACTOR 2.